We begin with the raw amino-acid sequence, 476 residues long: Glutamate--tRNA ligase (476 aa).

The 'HIGH' region signature appears at 9 to 19 (PSPTGTLHIGT). Residues 248-252 (KLSKR) carry the 'KMSKS' region motif. ATP is bound at residue Lys-251.

This sequence belongs to the class-I aminoacyl-tRNA synthetase family. Glutamate--tRNA ligase type 1 subfamily. As to quaternary structure, monomer.

It localises to the cytoplasm. The enzyme catalyses tRNA(Glu) + L-glutamate + ATP = L-glutamyl-tRNA(Glu) + AMP + diphosphate. Catalyzes the attachment of glutamate to tRNA(Glu) in a two-step reaction: glutamate is first activated by ATP to form Glu-AMP and then transferred to the acceptor end of tRNA(Glu). This chain is Glutamate--tRNA ligase, found in Prochlorococcus marinus (strain MIT 9303).